Consider the following 88-residue polypeptide: UPF0147 protein Ta0600 (88 aa).

The protein belongs to the UPF0147 family.

This chain is UPF0147 protein Ta0600, found in Thermoplasma acidophilum (strain ATCC 25905 / DSM 1728 / JCM 9062 / NBRC 15155 / AMRC-C165).